The sequence spans 356 residues: Histidinol-phosphate aminotransferase 1 (356 aa).

An N6-(pyridoxal phosphate)lysine modification is found at Lys217.

It belongs to the class-II pyridoxal-phosphate-dependent aminotransferase family. Histidinol-phosphate aminotransferase subfamily. Homodimer. The cofactor is pyridoxal 5'-phosphate.

It catalyses the reaction L-histidinol phosphate + 2-oxoglutarate = 3-(imidazol-4-yl)-2-oxopropyl phosphate + L-glutamate. It functions in the pathway amino-acid biosynthesis; L-histidine biosynthesis; L-histidine from 5-phospho-alpha-D-ribose 1-diphosphate: step 7/9. The sequence is that of Histidinol-phosphate aminotransferase 1 from Burkholderia mallei (strain ATCC 23344).